The chain runs to 1848 residues: Cellulose-binding protein A (1848 aa).

The signal sequence occupies residues 1–28; that stretch reads MQKKKSLNLLLALMMVFALVLPSIPALA. Residues 29 to 190 enclose the CBM3 domain; sequence ATSSMSVEFY…GAKVLGTAPG (162 aa). Cohesin domains lie at 291 to 428, 435 to 570, 668 to 801, 810 to 943, 952 to 1085, 1094 to 1227, 1236 to 1369, 1377 to 1511, and 1709 to 1847; these read VTAT…TVTI, MQIS…SVTI, VTAT…SVTI, VKAT…RLTI, and FAVK…SVKV.

Post-translationally, the N-terminus is blocked. In terms of processing, glycosylated.

Its subcellular location is the secreted. Binds to cellulose fibers and coordinates cellulase enzymes. This is Cellulose-binding protein A (cbpA) from Clostridium cellulovorans.